The primary structure comprises 283 residues: Thymidylate synthase (283 aa).

R22 serves as a coordination point for dUMP. C160 serves as the catalytic Nucleophile. DUMP contacts are provided by residues 180-183, N191, and 221-223; these read RSCD and HIY. D183 contacts (6R)-5,10-methylene-5,6,7,8-tetrahydrofolate. Position 282 (S282) interacts with (6R)-5,10-methylene-5,6,7,8-tetrahydrofolate.

The protein belongs to the thymidylate synthase family. Bacterial-type ThyA subfamily. As to quaternary structure, homodimer.

The protein resides in the cytoplasm. It carries out the reaction dUMP + (6R)-5,10-methylene-5,6,7,8-tetrahydrofolate = 7,8-dihydrofolate + dTMP. It functions in the pathway pyrimidine metabolism; dTTP biosynthesis. In terms of biological role, catalyzes the reductive methylation of 2'-deoxyuridine-5'-monophosphate (dUMP) to 2'-deoxythymidine-5'-monophosphate (dTMP) while utilizing 5,10-methylenetetrahydrofolate (mTHF) as the methyl donor and reductant in the reaction, yielding dihydrofolate (DHF) as a by-product. This enzymatic reaction provides an intracellular de novo source of dTMP, an essential precursor for DNA biosynthesis. This is Thymidylate synthase from Vibrio parahaemolyticus serotype O3:K6 (strain RIMD 2210633).